The primary structure comprises 782 residues: Anoctamin-9 (782 aa).

The Cytoplasmic segment spans residues 1–198; it reads MQGEESLRIL…LYFVWLGWYT (198 aa). Residues 199 to 219 traverse the membrane as a helical segment; the sequence is YMLVPAALTGLLVFLSGFSLF. Residues 220–264 are Extracellular-facing; the sequence is EASQISKEICEAHDILMCPLGDHSRRYQRLSETCTFAKLTHLFDN. Phosphoserine; by PKA is present on Ser250. Residues 265 to 285 traverse the membrane as a helical segment; that stretch reads DGTVVFAIFMALWATVFLEIW. The Cytoplasmic portion of the chain corresponds to 286–331; sequence KRQRARVVLHWDLYVWDEEQEEMALQLINCPDYKLRPYQHSYLRST. A helical membrane pass occupies residues 332 to 352; sequence VILVLTLLMICLMIGMAHVLV. Residues 353–373 are Extracellular-facing; it reads VYRVLASALFSSSAVPFLEEQ. Residues 374–394 form a helical membrane-spanning segment; sequence VTTAVVVTGALVHYVTIIIMT. Topologically, residues 395–423 are cytoplasmic; the sequence is KINRCVALKLCDFEMPRTFSERESRFTIR. A helical membrane pass occupies residues 424–444; sequence FFTLQFFTHFSSLIYIAFILG. Residues 445-552 lie on the Extracellular side of the membrane; that stretch reads RINGHPGKST…EMMIQYGFTT (108 aa). The helical transmembrane segment at 553-573 threads the bilayer; that stretch reads IFVAAFPLAPLLALFSNLVEI. The Cytoplasmic segment spans residues 574–604; that stretch reads RLDAIKMVWLQRRLVPRKAKDIGTWLQVLET. Residues 605-625 form a helical membrane-spanning segment; it reads IGVLAVIANGMVIAFTSEFIP. At 626–703 the chain is on the extracellular side; it reads RVVYKYRYSP…QFWFLLAIRL (78 aa). N-linked (GlcNAc...) asparagine glycosylation is found at Asn641, Asn652, Asn674, and Asn690. The helical transmembrane segment at 704–724 threads the bilayer; it reads AFVILFEHVALCIKLIAAWFV. Over 725 to 782 the chain is Cytoplasmic; it reads PDIPQSVKNKVLEVKYQRLREKMWHGRQRLGGVGAGSRPPMPAHPTPASIFSARSTDV. Positions 756–782 are disordered; it reads GVGAGSRPPMPAHPTPASIFSARSTDV.

Belongs to the anoctamin family. Phosphorylated on serine residues by cAMP-dependent protein kinase A (PKA) which is essential for activation of its cation channel activity. As to expression, expressed in the kidney. Expressed in the olfactory epithelium.

It is found in the cell membrane. It localises to the endoplasmic reticulum. It carries out the reaction a 1,2-diacyl-sn-glycero-3-phospho-L-serine(in) = a 1,2-diacyl-sn-glycero-3-phospho-L-serine(out). The enzyme catalyses a beta-D-galactosyl-(1&lt;-&gt;1')-N-acylsphing-4-enine(out) = a beta-D-galactosyl-(1&lt;-&gt;1')-N-acylsphing-4-enine(in). The catalysed reaction is a 1,2-diacyl-sn-glycero-3-phosphocholine(in) = a 1,2-diacyl-sn-glycero-3-phosphocholine(out). It catalyses the reaction Ca(2+)(in) = Ca(2+)(out). It carries out the reaction Na(+)(in) = Na(+)(out). The enzyme catalyses K(+)(in) = K(+)(out). Its activity is regulated as follows. Cation channel activity is activated via phosphorylation on serine residues by cAMP-dependent protein kinase A (PKA). In terms of biological role, PKA-activated nonselective cation channel. Discriminates poorly among cations but is more permeable to Ca(2+) ions than to monovalent cations. Acts as a calcium-activated calcium permeable channel which may operate as a endoplasmic reticulum (ER) Ca(2+)-leak channel, reducing the loading of the ER Ca(2+) store. Regulates intracellular Ca2+ signals, ion channel activity, and cytokine release in the renal tissue. Plays an important role in olfaction, amplifying cAMP-evoked cyclic nucleotide-gated (CNG) channel currents in the olfactory sensory neurons. Has calcium-dependent phospholipid scramblase activity; scrambles phosphatidylserine, phosphatidylcholine and galactosylceramide. Does not exhibit calcium-activated chloride channel (CaCC) activity. Can inhibit the activity of ANO1. This chain is Anoctamin-9 (ANO9), found in Homo sapiens (Human).